A 366-amino-acid polypeptide reads, in one-letter code: Molybdenum import ATP-binding protein ModC (366 aa).

An ABC transporter domain is found at 1–231; that stretch reads MSEVILQLQK…KAMRPWQSFS (231 aa). ATP is bound at residue 33–40; that stretch reads GRSGAGKT. Residues 292 to 361 form the Mop domain; the sequence is ASSIRNILPA…IKGVSVAQRD (70 aa).

This sequence belongs to the ABC transporter superfamily. Molybdate importer (TC 3.A.1.8) family. In terms of assembly, the complex is composed of two ATP-binding proteins (ModC), two transmembrane proteins (ModB) and a solute-binding protein (ModA).

The protein resides in the cell inner membrane. It catalyses the reaction molybdate(out) + ATP + H2O = molybdate(in) + ADP + phosphate + H(+). Functionally, part of the ABC transporter complex ModABC involved in molybdenum import. Responsible for energy coupling to the transport system. This Vibrio cholerae serotype O1 (strain ATCC 39315 / El Tor Inaba N16961) protein is Molybdenum import ATP-binding protein ModC.